The chain runs to 516 residues: Golgi-associated kinase 1B (516 aa).

Over 1 to 37 (MTCPDKLGQLINWFVCSLCAPRVCKLWSSRRPRTRRN) the chain is Cytoplasmic. The chain crosses the membrane as a helical; Signal-anchor for type II membrane protein span at residues 38–55 (LLLGTACAIYLGFLVSQV). Over 56–516 (GKGSFQHGQA…HGARVLPMNE (461 aa)) the chain is Extracellular. Asparagine 286 carries an N-linked (GlcNAc...) asparagine glycan.

The protein belongs to the GASK family.

It is found in the golgi apparatus membrane. In Rattus norvegicus (Rat), this protein is Golgi-associated kinase 1B.